The primary structure comprises 266 residues: Ribonuclease 3 (266 aa).

In terms of domain architecture, RNase III spans Ile34–Gly158. Glu72 contacts Mg(2+). The active site involves Asp76. Mg(2+) contacts are provided by Asp144 and Glu147. Glu147 is an active-site residue. Residues Asn185–Asn254 enclose the DRBM domain.

Belongs to the ribonuclease III family. As to quaternary structure, homodimer. The cofactor is Mg(2+).

Its subcellular location is the cytoplasm. It carries out the reaction Endonucleolytic cleavage to 5'-phosphomonoester.. Its function is as follows. Digests double-stranded RNA. Involved in the processing of primary rRNA transcript to yield the immediate precursors to the large and small rRNAs (23S and 16S). Processes some mRNAs, and tRNAs when they are encoded in the rRNA operon. Processes pre-crRNA and tracrRNA of type II CRISPR loci if present in the organism. The chain is Ribonuclease 3 from Rhodopirellula baltica (strain DSM 10527 / NCIMB 13988 / SH1).